Here is a 235-residue protein sequence, read N- to C-terminus: Phosphatidylserine decarboxylase proenzyme (235 aa).

Catalysis depends on Ser204, which acts as the Schiff-base intermediate with substrate; via pyruvic acid. Ser204 is modified (pyruvic acid (Ser); by autocatalysis).

The protein belongs to the phosphatidylserine decarboxylase family. PSD-A subfamily. Heterodimer of a large membrane-associated beta subunit and a small pyruvoyl-containing alpha subunit. Requires pyruvate as cofactor. In terms of processing, is synthesized initially as an inactive proenzyme. Formation of the active enzyme involves a self-maturation process in which the active site pyruvoyl group is generated from an internal serine residue via an autocatalytic post-translational modification. Two non-identical subunits are generated from the proenzyme in this reaction, and the pyruvate is formed at the N-terminus of the alpha chain, which is derived from the carboxyl end of the proenzyme. The post-translation cleavage follows an unusual pathway, termed non-hydrolytic serinolysis, in which the side chain hydroxyl group of the serine supplies its oxygen atom to form the C-terminus of the beta chain, while the remainder of the serine residue undergoes an oxidative deamination to produce ammonia and the pyruvoyl prosthetic group on the alpha chain.

It is found in the cell membrane. It carries out the reaction a 1,2-diacyl-sn-glycero-3-phospho-L-serine + H(+) = a 1,2-diacyl-sn-glycero-3-phosphoethanolamine + CO2. The protein operates within phospholipid metabolism; phosphatidylethanolamine biosynthesis; phosphatidylethanolamine from CDP-diacylglycerol: step 2/2. In terms of biological role, catalyzes the formation of phosphatidylethanolamine (PtdEtn) from phosphatidylserine (PtdSer). This chain is Phosphatidylserine decarboxylase proenzyme, found in Mycobacterium sp. (strain JLS).